Reading from the N-terminus, the 142-residue chain is Large ribosomal subunit protein uL13 (142 aa).

This sequence belongs to the universal ribosomal protein uL13 family. As to quaternary structure, part of the 50S ribosomal subunit.

Its function is as follows. This protein is one of the early assembly proteins of the 50S ribosomal subunit, although it is not seen to bind rRNA by itself. It is important during the early stages of 50S assembly. The polypeptide is Large ribosomal subunit protein uL13 (Trichlorobacter lovleyi (strain ATCC BAA-1151 / DSM 17278 / SZ) (Geobacter lovleyi)).